The sequence spans 133 residues: uncharacterized protein (133 aa).

A disordered region spans residues 44-79 (VENQLASSKTEEQTLKISKKSNLNPAQKSSTFGLEN). The segment covering 63 to 79 (KSNLNPAQKSSTFGLEN) has biased composition (polar residues).

The protein resides in the plastid. Its subcellular location is the chloroplast. This is an uncharacterized protein from Chlorella vulgaris (Green alga).